The following is a 133-amino-acid chain: Large ribosomal subunit protein uL15 (133 aa).

The tract at residues 1 to 60 (MALENLKPAQGSTKDRKRVGRGQGSGMGKTSTRGGKGQTARTGYKAKRGFEGGQQPLQRR) is disordered.

Belongs to the universal ribosomal protein uL15 family. Part of the 50S ribosomal subunit.

Functionally, binds to the 23S rRNA. The sequence is that of Large ribosomal subunit protein uL15 from Wolinella succinogenes (strain ATCC 29543 / DSM 1740 / CCUG 13145 / JCM 31913 / LMG 7466 / NCTC 11488 / FDC 602W) (Vibrio succinogenes).